Here is a 373-residue protein sequence, read N- to C-terminus: Glutamate 5-kinase (373 aa).

An ATP-binding site is contributed by Lys-15. The substrate site is built by Ser-55, Asp-142, and Asn-154. Residues 174–175 (TD) and 216–222 (TGGMVTK) contribute to the ATP site. Residues 281–359 (SGRVIVDDGA…GEIEAILGYK (79 aa)) enclose the PUA domain.

This sequence belongs to the glutamate 5-kinase family.

The protein resides in the cytoplasm. The enzyme catalyses L-glutamate + ATP = L-glutamyl 5-phosphate + ADP. It participates in amino-acid biosynthesis; L-proline biosynthesis; L-glutamate 5-semialdehyde from L-glutamate: step 1/2. In terms of biological role, catalyzes the transfer of a phosphate group to glutamate to form L-glutamate 5-phosphate. This chain is Glutamate 5-kinase, found in Geobacter metallireducens (strain ATCC 53774 / DSM 7210 / GS-15).